Consider the following 1399-residue polypeptide: DNA-directed RNA polymerase subunit beta' (1399 aa).

Cys-71, Cys-73, Cys-86, and Cys-89 together coordinate Zn(2+). The Mg(2+) site is built by Asp-462, Asp-464, and Asp-466. Zn(2+)-binding residues include Cys-810, Cys-884, Cys-891, and Cys-894.

It belongs to the RNA polymerase beta' chain family. The RNAP catalytic core consists of 2 alpha, 1 beta, 1 beta' and 1 omega subunit. When a sigma factor is associated with the core the holoenzyme is formed, which can initiate transcription. Requires Mg(2+) as cofactor. The cofactor is Zn(2+).

It carries out the reaction RNA(n) + a ribonucleoside 5'-triphosphate = RNA(n+1) + diphosphate. In terms of biological role, DNA-dependent RNA polymerase catalyzes the transcription of DNA into RNA using the four ribonucleoside triphosphates as substrates. This is DNA-directed RNA polymerase subunit beta' from Nitrobacter winogradskyi (strain ATCC 25391 / DSM 10237 / CIP 104748 / NCIMB 11846 / Nb-255).